The following is a 665-amino-acid chain: Cyclic nucleotide-gated cation channel subunit A (665 aa).

Residues 1–110 lie on the Cytoplasmic side of the membrane; it reads MRHFKVKAMV…DPTLQSHYRW (110 aa). A helical membrane pass occupies residues 111 to 131; sequence LAIVSLAVLYNIIFVVGRAVF. Over 132-138 the chain is Extracellular; the sequence is WEINKSA. A glycan (N-linked (GlcNAc...) asparagine) is linked at N135. Residues 139–159 traverse the membrane as a helical segment; it reads PAFWYTLDYLCDFIYLLDTLV. The Cytoplasmic segment spans residues 160 to 186; that stretch reads HMHEGFLDQGLLVRDAFRLRRHYFHTK. The chain crosses the membrane as a helical span at residues 187–207; it reads GWYLDVLSMLPTDLAYIWWPP. Residues 208 to 253 are Extracellular-facing; the sequence is ETCSSLYLPCPVIVRLNRLLRINRLWEWFDRTETATGYPNAFRICK. The chain crosses the membrane as a helical span at residues 254–274; the sequence is VVLAILVLIHWNACMYFAISY. The Cytoplasmic segment spans residues 275–325; sequence EIGFSSDSWVYNLNGTRNNTLQRQYIYSFYWSTLTLTTIGETPTPENDVEY. A helical transmembrane segment spans residues 326-346; sequence LFVVADFLAGVLIFATIVGNI. Over 347–481 the chain is Extracellular; it reads GSMISNMNVA…GKLSVVGDDG (135 aa). 3',5'-cyclic GMP contacts are provided by residues 437 to 559, E496, and R511; that span reads LLEA…DGLL. A helical membrane pass occupies residues 482 to 502; that stretch reads ITVLATLGAGSVFGEVSVLEI. Topologically, residues 503 to 665 are cytoplasmic; sequence AGNRTGNRRT…SSDAAKQNTL (163 aa). Residues 633–665 are disordered; sequence RSGRLYSLQPKRRPRSRPDATAKSSDAAKQNTL. Polar residues predominate over residues 654-665; the sequence is AKSSDAAKQNTL.

This sequence belongs to the cyclic nucleotide-gated cation channel (TC 1.A.1.5) family. As to expression, expressed in antennae and the visual system.

The protein localises to the membrane. Its function is as follows. Approximately 50-fold more sensitive to cGMP than to cAMP. May be involved in transduction cascades of both invertebrate photoreceptors and olfactory sensillae. This chain is Cyclic nucleotide-gated cation channel subunit A (CngA), found in Drosophila melanogaster (Fruit fly).